A 140-amino-acid chain; its full sequence is Small ribosomal subunit protein uS12 (140 aa).

Residue aspartate 102 is modified to 3-methylthioaspartic acid.

Belongs to the universal ribosomal protein uS12 family. In terms of assembly, part of the 30S ribosomal subunit. Contacts proteins S8 and S17. May interact with IF1 in the 30S initiation complex.

Its function is as follows. With S4 and S5 plays an important role in translational accuracy. Functionally, interacts with and stabilizes bases of the 16S rRNA that are involved in tRNA selection in the A site and with the mRNA backbone. Located at the interface of the 30S and 50S subunits, it traverses the body of the 30S subunit contacting proteins on the other side and probably holding the rRNA structure together. The combined cluster of proteins S8, S12 and S17 appears to hold together the shoulder and platform of the 30S subunit. The protein is Small ribosomal subunit protein uS12 of Bacillus anthracis (strain A0248).